Here is a 489-residue protein sequence, read N- to C-terminus: N-succinylglutamate 5-semialdehyde dehydrogenase (489 aa).

224 to 229 is a binding site for NAD(+); it reads GSAKVG. Residues glutamate 247 and cysteine 281 contribute to the active site.

This sequence belongs to the aldehyde dehydrogenase family. AstD subfamily.

It catalyses the reaction N-succinyl-L-glutamate 5-semialdehyde + NAD(+) + H2O = N-succinyl-L-glutamate + NADH + 2 H(+). It functions in the pathway amino-acid degradation; L-arginine degradation via AST pathway; L-glutamate and succinate from L-arginine: step 4/5. Catalyzes the NAD-dependent reduction of succinylglutamate semialdehyde into succinylglutamate. This Chromohalobacter salexigens (strain ATCC BAA-138 / DSM 3043 / CIP 106854 / NCIMB 13768 / 1H11) protein is N-succinylglutamate 5-semialdehyde dehydrogenase.